A 506-amino-acid polypeptide reads, in one-letter code: RNA-splicing ligase RtcB homolog (506 aa).

Mn(2+) contacts are provided by Asp120, Cys123, His228, His260, and His354. GMP is bound at residue 227 to 231 (NHYAE). GMP-binding positions include 354 to 355 (HN), 403 to 406 (GGSM), Ser410, 429 to 432 (HGAG), and Lys505. His429 functions as the GMP-histidine intermediate in the catalytic mechanism.

The protein belongs to the RtcB family. As to quaternary structure, catalytic component of the tRNA-splicing ligase complex. It depends on Mn(2+) as a cofactor.

It carries out the reaction a 3'-end 3'-phospho-ribonucleotide-RNA + a 5'-end dephospho-ribonucleoside-RNA + GTP = a ribonucleotidyl-ribonucleotide-RNA + GMP + diphosphate. It catalyses the reaction a 3'-end 2',3'-cyclophospho-ribonucleotide-RNA + a 5'-end dephospho-ribonucleoside-RNA + GTP + H2O = a ribonucleotidyl-ribonucleotide-RNA + GMP + diphosphate + H(+). In terms of biological role, catalytic subunit of the tRNA-splicing ligase complex that acts by directly joining spliced tRNA halves to mature-sized tRNAs by incorporating the precursor-derived splice junction phosphate into the mature tRNA as a canonical 3',5'-phosphodiester. May act as an RNA ligase with broad substrate specificity, and may function toward other RNAs. This chain is RNA-splicing ligase RtcB homolog, found in Aedes aegypti (Yellowfever mosquito).